The sequence spans 131 residues: Fluoride-specific ion channel FluC (131 aa).

4 helical membrane-spanning segments follow: residues 4–24 (LWIM…TGFV), 30–50 (GIFP…IGFF), 68–88 (LFVM…SLQT), and 104–124 (IALS…VAVA). Na(+) contacts are provided by G76 and T79.

This sequence belongs to the fluoride channel Fluc/FEX (TC 1.A.43) family.

Its subcellular location is the cell inner membrane. It catalyses the reaction fluoride(in) = fluoride(out). Na(+) is not transported, but it plays an essential structural role and its presence is essential for fluoride channel function. In terms of biological role, fluoride-specific ion channel. Important for reducing fluoride concentration in the cell, thus reducing its toxicity. In Methylocella silvestris (strain DSM 15510 / CIP 108128 / LMG 27833 / NCIMB 13906 / BL2), this protein is Fluoride-specific ion channel FluC.